Here is an 89-residue protein sequence, read N- to C-terminus: MATIQIIIEEDNVTINVKKNQVPPIEVSPKIPPIEIENVKKNVLCPICLIAKVNTVLECTHVLCSNCVKKINVCPICRKTFQSINFFRL.

The segment at 45 to 78 (CPICLIAKVNTVLECTHVLCSNCVKKINVCPICR) adopts an RING-type zinc-finger fold.

This chain is Putative RING finger protein 121R, found in Invertebrate iridescent virus 6 (IIV-6).